The primary structure comprises 786 residues: Endonuclease MutS2 (786 aa).

An ATP-binding site is contributed by 333–340 (GPNTGGKT). The disordered stretch occupies residues 682-709 (EKIKPSKQSAAQRPVVKVSGGGMSGPST). The 76-residue stretch at 711–786 (LDLRGERYDQ…GSGATIVNFK (76 aa)) folds into the Smr domain.

This sequence belongs to the DNA mismatch repair MutS family. MutS2 subfamily. As to quaternary structure, homodimer. Binds to stalled ribosomes, contacting rRNA.

Its function is as follows. Endonuclease that is involved in the suppression of homologous recombination and thus may have a key role in the control of bacterial genetic diversity. Acts as a ribosome collision sensor, splitting the ribosome into its 2 subunits. Detects stalled/collided 70S ribosomes which it binds and splits by an ATP-hydrolysis driven conformational change. Acts upstream of the ribosome quality control system (RQC), a ribosome-associated complex that mediates the extraction of incompletely synthesized nascent chains from stalled ribosomes and their subsequent degradation. Probably generates substrates for RQC. The sequence is that of Endonuclease MutS2 from Lacticaseibacillus casei (strain BL23) (Lactobacillus casei).